A 180-amino-acid polypeptide reads, in one-letter code: Large ribosomal subunit protein uL5 (180 aa).

This sequence belongs to the universal ribosomal protein uL5 family. Part of the 50S ribosomal subunit; part of the 5S rRNA/L5/L18/L25 subcomplex. Contacts the 5S rRNA and the P site tRNA. Forms a bridge to the 30S subunit in the 70S ribosome.

In terms of biological role, this is one of the proteins that bind and probably mediate the attachment of the 5S RNA into the large ribosomal subunit, where it forms part of the central protuberance. In the 70S ribosome it contacts protein S13 of the 30S subunit (bridge B1b), connecting the 2 subunits; this bridge is implicated in subunit movement. Contacts the P site tRNA; the 5S rRNA and some of its associated proteins might help stabilize positioning of ribosome-bound tRNAs. The protein is Large ribosomal subunit protein uL5 of Streptococcus pneumoniae (strain JJA).